The primary structure comprises 110 residues: uncharacterized protein (110 aa).

This is an uncharacterized protein from Archaeoglobus fulgidus (strain ATCC 49558 / DSM 4304 / JCM 9628 / NBRC 100126 / VC-16).